The primary structure comprises 365 residues: UPF0718 protein MJ0584 (365 aa).

A run of 11 helical transmembrane segments spans residues 6–26, 32–52, 67–87, 108–128, 130–150, 174–194, 201–221, 245–265, 282–302, 308–328, and 344–364; these read MSFI…YLNV, LLMA…NFII, VAAV…PLFA, AINV…IGFL, AVFA…IFKS, ITFF…PKLF, LYDG…ILAV, IVFP…AIIP, FIAS…VPII, LGMG…LSIP, and TYLG…GIIL.

Belongs to the UPF0718 family.

The protein localises to the cell membrane. This Methanocaldococcus jannaschii (strain ATCC 43067 / DSM 2661 / JAL-1 / JCM 10045 / NBRC 100440) (Methanococcus jannaschii) protein is UPF0718 protein MJ0584.